Reading from the N-terminus, the 126-residue chain is Small ribosomal subunit protein uS13 (126 aa).

Residues histidine 92–lysine 126 form a disordered region.

This sequence belongs to the universal ribosomal protein uS13 family. In terms of assembly, part of the 30S ribosomal subunit. Forms a loose heterodimer with protein S19. Forms two bridges to the 50S subunit in the 70S ribosome.

In terms of biological role, located at the top of the head of the 30S subunit, it contacts several helices of the 16S rRNA. In the 70S ribosome it contacts the 23S rRNA (bridge B1a) and protein L5 of the 50S subunit (bridge B1b), connecting the 2 subunits; these bridges are implicated in subunit movement. Contacts the tRNAs in the A and P-sites. This Deinococcus radiodurans (strain ATCC 13939 / DSM 20539 / JCM 16871 / CCUG 27074 / LMG 4051 / NBRC 15346 / NCIMB 9279 / VKM B-1422 / R1) protein is Small ribosomal subunit protein uS13.